We begin with the raw amino-acid sequence, 300 residues long: ClpXP adapter protein SpxH (300 aa).

The protein belongs to the SpxH family. Interacts with Spx.

It is found in the cytoplasm. Functionally, adapter protein required for efficient degradation of Spx by ClpXP under non-stress conditions. Interaction with Spx stabilizes Spx and exposes the C-terminus of Spx for recognition and proteolysis by ClpXP. The sequence is that of ClpXP adapter protein SpxH from Bacillus licheniformis (strain ATCC 14580 / DSM 13 / JCM 2505 / CCUG 7422 / NBRC 12200 / NCIMB 9375 / NCTC 10341 / NRRL NRS-1264 / Gibson 46).